A 118-amino-acid polypeptide reads, in one-letter code: Evasin P1080 (118 aa).

The first 19 residues, 1–19 (FFQLAVFVVILFNINLLSA), serve as a signal peptide directing secretion. Cystine bridges form between Cys41–Cys60, Cys45–Cys62, and Cys56–Cys73. A glycan (N-linked (GlcNAc...) asparagine) is linked at Asn44. N-linked (GlcNAc...) asparagine glycans are attached at residues Asn67 and Asn104.

It is found in the secreted. In terms of biological role, salivary chemokine-binding protein which binds to host chemokines CXCL1, CXCL2, CXCL3, CXCL4, CXCL5, CXCL6, CXCL10, CXCL11 and CXCL13. The chain is Evasin P1080 from Ixodes ricinus (Common tick).